Here is a 351-residue protein sequence, read N- to C-terminus: Serine protease inhibitor dipetalogastin (351 aa).

A propeptide spanning residues 1–131 (LIKELVNMVI…AETTNAMEVL (131 aa)) is cleaved from the precursor. 6 consecutive Kazal-like domains span residues 19–69 (KELK…PCDE), 72–122 (HDFE…ECHA), 131–181 (LFQG…PCDE), 184–234 (HDFE…ECHP), 240–289 (QLIL…ECKV), and 297–347 (GEVR…RCLP). 18 cysteine pairs are disulfide-bonded: Cys-25-Cys-50, Cys-27-Cys-46, Cys-35-Cys-67, Cys-78-Cys-103, Cys-80-Cys-99, Cys-88-Cys-120, Cys-137-Cys-162, Cys-139-Cys-158, Cys-147-Cys-179, Cys-190-Cys-215, Cys-192-Cys-211, Cys-200-Cys-232, Cys-246-Cys-271, Cys-248-Cys-267, Cys-256-Cys-287, Cys-303-Cys-328, Cys-305-Cys-324, and Cys-313-Cys-345.

It is found in the secreted. Thrombin inhibitor. Prevents blood clotting to allow insect to feed on blood. Also functions as an inhibitor of trypsin and plasmin. The polypeptide is Serine protease inhibitor dipetalogastin (Dipetalogaster maximus (Blood-sucking bug)).